The chain runs to 282 residues: Putative hydrolase Bcen_5340 (282 aa).

Mg(2+) is bound by residues Glu-124, Glu-126, and Asp-155.

This sequence belongs to the FAH family. It depends on Mg(2+) as a cofactor.

This is Putative hydrolase Bcen_5340 from Burkholderia orbicola (strain AU 1054).